Consider the following 371-residue polypeptide: Peptide chain release factor 2 (371 aa).

The residue at position 251 (Q251) is an N5-methylglutamine.

The protein belongs to the prokaryotic/mitochondrial release factor family. Post-translationally, methylated by PrmC. Methylation increases the termination efficiency of RF2.

Its subcellular location is the cytoplasm. Its function is as follows. Peptide chain release factor 2 directs the termination of translation in response to the peptide chain termination codons UGA and UAA. This Pseudarthrobacter chlorophenolicus (strain ATCC 700700 / DSM 12829 / CIP 107037 / JCM 12360 / KCTC 9906 / NCIMB 13794 / A6) (Arthrobacter chlorophenolicus) protein is Peptide chain release factor 2.